The sequence spans 741 residues: Transketolase, chloroplastic (741 aa).

The segment covering 1–19 has biased composition (low complexity); the sequence is MAASSSLSTLSHHQTLLSH. Residues 1 to 33 form a disordered region; the sequence is MAASSSLSTLSHHQTLLSHPKTHLPTTPASSLL. The transit peptide at 1-66 directs the protein to the chloroplast; that stretch reads MAASSSLSTL…VGSASAVVRA (66 aa). Residues 24–33 are compositionally biased toward polar residues; that stretch reads LPTTPASSLL. H103 lines the substrate pocket. Thiamine diphosphate-binding positions include H143 and 192–194; that span reads GPL. D233 lines the Mg(2+) pocket. Thiamine diphosphate is bound by residues G234 and N263. Mg(2+) contacts are provided by N263 and I265. H340, R434, and S461 together coordinate substrate. H340 provides a ligand contact to thiamine diphosphate. 2 residues coordinate thiamine diphosphate: E488 and F515. E488 serves as the catalytic Proton donor. The substrate site is built by H539, D547, and R598.

Belongs to the transketolase family. As to quaternary structure, homodimer. Mg(2+) is required as a cofactor. It depends on Ca(2+) as a cofactor. Requires Mn(2+) as cofactor. The cofactor is Co(2+). Thiamine diphosphate serves as cofactor.

It localises to the plastid. The protein localises to the chloroplast thylakoid membrane. The enzyme catalyses D-sedoheptulose 7-phosphate + D-glyceraldehyde 3-phosphate = aldehydo-D-ribose 5-phosphate + D-xylulose 5-phosphate. The protein operates within carbohydrate biosynthesis; Calvin cycle. In terms of biological role, catalyzes the reversible transfer of a two-carbon ketol group from fructose-6-phosphate or sedoheptulose-7-phosphate to glyceraldehyde-3-phosphate to yield xylulose-5-phosphate and erythrose-4-phosphate or ribose-5-phosphate, respectively. This is Transketolase, chloroplastic from Spinacia oleracea (Spinach).